The primary structure comprises 282 residues: High mobility group nucleosome-binding domain-containing protein 5 (282 aa).

The segment at 1–282 (MPKRKAAGQG…GKKEEPQSIV (282 aa)) is disordered. Threonine 31 carries the post-translational modification Phosphothreonine. Positions 37 to 46 (KRTSSSRKMK) are enriched in basic residues. Residue lysine 67 forms a Glycyl lysine isopeptide (Lys-Gly) (interchain with G-Cter in SUMO2) linkage. The residue at position 76 (tyrosine 76) is a Phosphotyrosine. Residues 81-119 (KNGEAKITEAPASEKEIVEVKEENIEDATEKGGEKKEAV) are compositionally biased toward basic and acidic residues. Position 93 is a phosphoserine (serine 93). Lysine 101 is covalently cross-linked (Glycyl lysine isopeptide (Lys-Gly) (interchain with G-Cter in SUMO1); alternate). A Glycyl lysine isopeptide (Lys-Gly) (interchain with G-Cter in SUMO2); alternate cross-link involves residue lysine 101. A Glycyl lysine isopeptide (Lys-Gly) (interchain with G-Cter in SUMO2) cross-link involves residue lysine 124. A compositionally biased stretch (acidic residues) spans 125-138 (NEEEDQKEDEEDQN). Composition is skewed to basic and acidic residues over residues 139–152 (EEKG…KDEK) and 158–256 (KEDK…KEDL). Over residues 257-270 (KEEEEGKEEDEIKE) the composition is skewed to acidic residues. Positions 271–282 (DDGKKEEPQSIV) are enriched in basic and acidic residues.

Belongs to the HMGN family. As to expression, ubiquitously expressed.

Its subcellular location is the nucleus. In terms of biological role, preferentially binds to euchromatin and modulates cellular transcription by counteracting linker histone-mediated chromatin compaction. This Homo sapiens (Human) protein is High mobility group nucleosome-binding domain-containing protein 5 (HMGN5).